We begin with the raw amino-acid sequence, 150 residues long: UPF0039 protein C11D3.02c (150 aa).

The N-acetyltransferase domain maps to 9 to 150 (KYFNSLDVKE…IPHVEMRLEL (142 aa)).

Belongs to the UPF0039 (ElaA) family.

The protein is UPF0039 protein C11D3.02c of Schizosaccharomyces pombe (strain 972 / ATCC 24843) (Fission yeast).